The sequence spans 127 residues: Holo-[acyl-carrier-protein] synthase (127 aa).

2 residues coordinate Mg(2+): D8 and E56.

It belongs to the P-Pant transferase superfamily. AcpS family. Requires Mg(2+) as cofactor.

It is found in the cytoplasm. The catalysed reaction is apo-[ACP] + CoA = holo-[ACP] + adenosine 3',5'-bisphosphate + H(+). Its function is as follows. Transfers the 4'-phosphopantetheine moiety from coenzyme A to a Ser of acyl-carrier-protein. The polypeptide is Holo-[acyl-carrier-protein] synthase (Deinococcus deserti (strain DSM 17065 / CIP 109153 / LMG 22923 / VCD115)).